Reading from the N-terminus, the 380-residue chain is Cytochrome b (380 aa).

Helical transmembrane passes span 33 to 53 (FGSL…FLAM), 77 to 98 (WLIR…FIHV), 113 to 133 (WNIG…GYVL), and 178 to 198 (FFAF…VHLL). Heme b contacts are provided by His83 and His97. 2 residues coordinate heme b: His182 and His196. His201 contacts a ubiquinone. The next 4 membrane-spanning stretches (helical) occupy residues 226–246 (IKDL…VLFF), 288–308 (LGGV…PLLN), 320–340 (LTQF…WIGG), and 347–367 (FTTI…VLMP).

This sequence belongs to the cytochrome b family. In terms of assembly, the cytochrome bc1 complex contains 11 subunits: 3 respiratory subunits (MT-CYB, CYC1 and UQCRFS1), 2 core proteins (UQCRC1 and UQCRC2) and 6 low-molecular weight proteins (UQCRH/QCR6, UQCRB/QCR7, UQCRQ/QCR8, UQCR10/QCR9, UQCR11/QCR10 and a cleavage product of UQCRFS1). This cytochrome bc1 complex then forms a dimer. Heme b is required as a cofactor.

The protein localises to the mitochondrion inner membrane. In terms of biological role, component of the ubiquinol-cytochrome c reductase complex (complex III or cytochrome b-c1 complex) that is part of the mitochondrial respiratory chain. The b-c1 complex mediates electron transfer from ubiquinol to cytochrome c. Contributes to the generation of a proton gradient across the mitochondrial membrane that is then used for ATP synthesis. The chain is Cytochrome b (MT-CYB) from Thomasomys notatus (Distinguished oldfield mouse).